The following is a 425-amino-acid chain: GTPase Obg (425 aa).

An Obg domain is found at 1 to 158 (MFIDKARIFV…RWITLELKMI (158 aa)). The OBG-type G domain maps to 159-330 (ADVGLLGFPN…VIAYVSKMLK (172 aa)). GTP-binding positions include 165–172 (GFPNVGKS), 190–194 (FTTLT), 212–215 (DIPG), 282–285 (NKFD), and 311–313 (SAA). Residues Ser172 and Thr192 each contribute to the Mg(2+) site. Residues 344–425 (YRPELDIGTE…IYELEFEFYN (82 aa)) enclose the OCT domain.

This sequence belongs to the TRAFAC class OBG-HflX-like GTPase superfamily. OBG GTPase family. In terms of assembly, monomer. Mg(2+) is required as a cofactor.

Its subcellular location is the cytoplasm. An essential GTPase which binds GTP, GDP and possibly (p)ppGpp with moderate affinity, with high nucleotide exchange rates and a fairly low GTP hydrolysis rate. Plays a role in control of the cell cycle, stress response, ribosome biogenesis and in those bacteria that undergo differentiation, in morphogenesis control. The protein is GTPase Obg of Clostridioides difficile (strain 630) (Peptoclostridium difficile).